The primary structure comprises 358 residues: Biotin synthase (358 aa).

One can recognise a Radical SAM core domain in the interval 55–278 (NKVRIHILDN…VNPDSEIRIA (224 aa)). 3 residues coordinate [4Fe-4S] cluster: cysteine 70, cysteine 74, and cysteine 77. [2Fe-2S] cluster-binding residues include cysteine 114, cysteine 146, cysteine 206, and arginine 276.

This sequence belongs to the radical SAM superfamily. Biotin synthase family. In terms of assembly, homodimer. [4Fe-4S] cluster is required as a cofactor. It depends on [2Fe-2S] cluster as a cofactor.

The enzyme catalyses (4R,5S)-dethiobiotin + (sulfur carrier)-SH + 2 reduced [2Fe-2S]-[ferredoxin] + 2 S-adenosyl-L-methionine = (sulfur carrier)-H + biotin + 2 5'-deoxyadenosine + 2 L-methionine + 2 oxidized [2Fe-2S]-[ferredoxin]. The protein operates within cofactor biosynthesis; biotin biosynthesis; biotin from 7,8-diaminononanoate: step 2/2. Its function is as follows. Catalyzes the conversion of dethiobiotin (DTB) to biotin by the insertion of a sulfur atom into dethiobiotin via a radical-based mechanism. This Leptospira borgpetersenii serovar Hardjo-bovis (strain JB197) protein is Biotin synthase.